The following is a 352-amino-acid chain: 2'-dehydrokanamycin reductase (352 aa).

It belongs to the NAD(P)-dependent epimerase/dehydratase family.

It catalyses the reaction 2'-dehydrokanamycin A + NADPH + H(+) = kanamycin A + NADP(+). Its pathway is antibiotic biosynthesis; kanamycin biosynthesis. Functionally, mediates the conversion of 2'-dehydrokanamycin A into kanamycin A. This chain is 2'-dehydrokanamycin reductase (kanK), found in Streptomyces kanamyceticus.